Reading from the N-terminus, the 195-residue chain is CDP-diacylglycerol--glycerol-3-phosphate 3-phosphatidyltransferase (195 aa).

4 helical membrane-spanning segments follow: residues 7-24, 60-81, 134-150, and 157-173; these read ITVL…LFYL, FGAF…VLLV, MLAL…FTFW, and FLLI…LQYL.

The protein belongs to the CDP-alcohol phosphatidyltransferase class-I family.

Its subcellular location is the cell membrane. The catalysed reaction is a CDP-1,2-diacyl-sn-glycerol + sn-glycerol 3-phosphate = a 1,2-diacyl-sn-glycero-3-phospho-(1'-sn-glycero-3'-phosphate) + CMP + H(+). Its pathway is phospholipid metabolism; phosphatidylglycerol biosynthesis; phosphatidylglycerol from CDP-diacylglycerol: step 1/2. Functionally, this protein catalyzes the committed step to the synthesis of the acidic phospholipids. In Pseudomonas fluorescens, this protein is CDP-diacylglycerol--glycerol-3-phosphate 3-phosphatidyltransferase (pgsA).